The chain runs to 410 residues: Aspartate aminotransferase (410 aa).

The L-aspartate site is built by G47, W135, and N185. K249 bears the N6-(pyridoxal phosphate)lysine mark. Residue R385 coordinates L-aspartate.

The protein belongs to the class-I pyridoxal-phosphate-dependent aminotransferase family. In terms of assembly, homodimer. Requires pyridoxal 5'-phosphate as cofactor.

The protein localises to the cytoplasm. The enzyme catalyses L-aspartate + 2-oxoglutarate = oxaloacetate + L-glutamate. Its function is as follows. Catalyzes the reversible conversion of aspartate and 2-oxoglutarate to glutamate and oxaloacetate. The sequence is that of Aspartate aminotransferase from Rhizobium meliloti (Ensifer meliloti).